A 369-amino-acid polypeptide reads, in one-letter code: Queuine tRNA-ribosyltransferase (369 aa).

Residue D89 is the Proton acceptor of the active site. Substrate contacts are provided by residues 89 to 93 (DSGGF), D142, Q184, and G211. Positions 242–248 (GGGSPEL) are RNA binding. The Nucleophile role is filled by D261. Residues 266–270 (TRIAR) are RNA binding; important for wobble base 34 recognition. C299, C301, C304, and H330 together coordinate Zn(2+).

It belongs to the queuine tRNA-ribosyltransferase family. Homodimer. Within each dimer, one monomer is responsible for RNA recognition and catalysis, while the other monomer binds to the replacement base PreQ1. Zn(2+) is required as a cofactor.

It carries out the reaction 7-aminomethyl-7-carbaguanine + guanosine(34) in tRNA = 7-aminomethyl-7-carbaguanosine(34) in tRNA + guanine. It functions in the pathway tRNA modification; tRNA-queuosine biosynthesis. Its function is as follows. Catalyzes the base-exchange of a guanine (G) residue with the queuine precursor 7-aminomethyl-7-deazaguanine (PreQ1) at position 34 (anticodon wobble position) in tRNAs with GU(N) anticodons (tRNA-Asp, -Asn, -His and -Tyr). Catalysis occurs through a double-displacement mechanism. The nucleophile active site attacks the C1' of nucleotide 34 to detach the guanine base from the RNA, forming a covalent enzyme-RNA intermediate. The proton acceptor active site deprotonates the incoming PreQ1, allowing a nucleophilic attack on the C1' of the ribose to form the product. After dissociation, two additional enzymatic reactions on the tRNA convert PreQ1 to queuine (Q), resulting in the hypermodified nucleoside queuosine (7-(((4,5-cis-dihydroxy-2-cyclopenten-1-yl)amino)methyl)-7-deazaguanosine). This Thermotoga maritima (strain ATCC 43589 / DSM 3109 / JCM 10099 / NBRC 100826 / MSB8) protein is Queuine tRNA-ribosyltransferase.